Here is a 122-residue protein sequence, read N- to C-terminus: Large ribosomal subunit protein uL14c (122 aa).

It belongs to the universal ribosomal protein uL14 family. As to quaternary structure, part of the 50S ribosomal subunit.

It is found in the plastid. Its subcellular location is the chloroplast. Its function is as follows. Binds to 23S rRNA. The protein is Large ribosomal subunit protein uL14c of Chlorella vulgaris (Green alga).